The chain runs to 461 residues: MTPNSMTENRLPAWDKQKPHPDRGQDWKLVGMSEACLHRKSHVERRGALKNEQTSSHLIQATWASSIFHLDPDDVNDQSVSSAQTFQTEEKKCKGYIPSYLDKDELCVVCGDKATGYHYRCITCEGCKGFFRRTIQKSLHPSYSCKYEGKCIIDKVTRNQCQECRFKKCIYVGMATDLVLDDSKRLAKRKLIEENREKRRREELQKSIGHKPEPTDEEWELIKTVTEAHVATNAQGSHWKQKRKFLPEDIGQAPIVNAPEGGQVDLEAFSHFTKIITPAITRVVDFAKKLPMFCELPCEDQIILLKGCCMEIMSLRAAVRYDPDSETLTLNGEMAVTRGQLKNGGLGVVSDAIFDLGMSLSSFNLDDTEVALLQAVLLMSSDRPGLACVERIEKYQDSFLLAFEHYINYRKHHVTHFWPKLLMKVTDLRMIGACHASRFLHMKVECPTELFPPLFLEVFED.

Positions 1–24 (MTPNSMTENRLPAWDKQKPHPDRG) are disordered. Residues 1-106 (MTPNSMTENR…IPSYLDKDEL (106 aa)) form a modulating region. A compositionally biased stretch (basic and acidic residues) spans 13–24 (AWDKQKPHPDRG). Zn(2+) contacts are provided by Cys107, Cys110, Cys124, Cys127, Cys145, Cys151, Cys161, and Cys164. 2 consecutive NR C4-type zinc fingers follow at residues 107 to 127 (CVVC…CEGC) and 145 to 169 (CKYE…FKKC). A DNA-binding region (nuclear receptor) is located at residues 107-181 (CVVCGDKATG…VGMATDLVLD (75 aa)). An NR LBD domain is found at 217-461 (EEWELIKTVT…PPLFLEVFED (245 aa)). The segment at 244–461 (KFLPEDIGQA…PPLFLEVFED (218 aa)) is interaction with NR2F6. Residues Arg282, Asn331, and His435 each contribute to the 3,3',5-triiodo-L-thyronine site. Positions 282, 331, and 435 each coordinate L-thyroxine.

This sequence belongs to the nuclear hormone receptor family. NR1 subfamily. Binds DNA as a dimer; homodimer and heterodimer with RXRA. Interacts with the coactivators NCOA1/SRC1, NCOA2/GRIP1, NCOA7 and MED1/TRAP220 in a ligand-inducible manner. Interacts with the corepressor NCOR1 in absence of ligand. Interacts with C1D. Interacts with NR2F6; the interaction impairs the binding of the THRB homodimer and THRB:RXRB heterodimer to T3 response elements. Interacts with PRMT2 and THRSP. Interacts with TACC1; this interaction is decreased in the presence of thyroid hormone T3.

The protein localises to the nucleus. Functionally, nuclear hormone receptor that can act as a repressor or activator of transcription. High affinity receptor for thyroid hormones, including triiodothyronine and thyroxine. The sequence is that of Thyroid hormone receptor beta (Thrb) from Rattus norvegicus (Rat).